Reading from the N-terminus, the 393-residue chain is NAD(P)H-quinone oxidoreductase subunit H, chloroplastic (393 aa).

The protein belongs to the complex I 49 kDa subunit family. NDH is composed of at least 16 different subunits, 5 of which are encoded in the nucleus.

It localises to the plastid. It is found in the chloroplast thylakoid membrane. The catalysed reaction is a plastoquinone + NADH + (n+1) H(+)(in) = a plastoquinol + NAD(+) + n H(+)(out). It carries out the reaction a plastoquinone + NADPH + (n+1) H(+)(in) = a plastoquinol + NADP(+) + n H(+)(out). In terms of biological role, NDH shuttles electrons from NAD(P)H:plastoquinone, via FMN and iron-sulfur (Fe-S) centers, to quinones in the photosynthetic chain and possibly in a chloroplast respiratory chain. The immediate electron acceptor for the enzyme in this species is believed to be plastoquinone. Couples the redox reaction to proton translocation, and thus conserves the redox energy in a proton gradient. This is NAD(P)H-quinone oxidoreductase subunit H, chloroplastic from Lotus japonicus (Lotus corniculatus var. japonicus).